We begin with the raw amino-acid sequence, 186 residues long: Ribosome-recycling factor (186 aa).

This sequence belongs to the RRF family.

The protein localises to the cytoplasm. Functionally, responsible for the release of ribosomes from messenger RNA at the termination of protein biosynthesis. May increase the efficiency of translation by recycling ribosomes from one round of translation to another. The chain is Ribosome-recycling factor from Rickettsia prowazekii (strain Madrid E).